The sequence spans 229 residues: Small ribosomal subunit protein uS3 (229 aa).

The region spanning 39–107 is the KH type-2 domain; the sequence is VRKFLEKKLK…PAQINIAEIR (69 aa).

Belongs to the universal ribosomal protein uS3 family. Part of the 30S ribosomal subunit. Forms a tight complex with proteins S10 and S14.

Functionally, binds the lower part of the 30S subunit head. Binds mRNA in the 70S ribosome, positioning it for translation. The sequence is that of Small ribosomal subunit protein uS3 from Shewanella loihica (strain ATCC BAA-1088 / PV-4).